Reading from the N-terminus, the 145-residue chain is Superoxide dismutase [Mn/Fe] (145 aa).

Fe(3+)-binding residues include His10 and His64. Residues His10 and His64 each contribute to the Mn(2+) site.

It belongs to the iron/manganese superoxide dismutase family. It depends on Mn(2+) as a cofactor. Fe(3+) serves as cofactor.

The catalysed reaction is 2 superoxide + 2 H(+) = H2O2 + O2. Destroys superoxide anion radicals which are normally produced within the cells and which are toxic to biological systems. Catalyzes the dismutation of superoxide anion radicals into O2 and H2O2 by successive reduction and oxidation of the transition metal ion at the active site. This Streptococcus porcinus protein is Superoxide dismutase [Mn/Fe] (sodA).